A 351-amino-acid polypeptide reads, in one-letter code: Thiamine-phosphate synthase (351 aa).

The segment at 1–129 is unknown; that stretch reads MVEPYSQQKQ…GQACKQMRYR (129 aa). The tract at residues 130–351 is thiamine-phosphate synthase; sequence VYSLETNLMG…SQLNRIKPES (222 aa). 4-amino-2-methyl-5-(diphosphooxymethyl)pyrimidine-binding positions include 177-181 and Asn-209; that span reads QYRDK. Mg(2+) is bound by residues Asp-210 and Asp-229. Position 248 (Ser-248) interacts with 4-amino-2-methyl-5-(diphosphooxymethyl)pyrimidine. Residue 274 to 276 coordinates 2-[(2R,5Z)-2-carboxy-4-methylthiazol-5(2H)-ylidene]ethyl phosphate; that stretch reads TPT. Residue Lys-277 participates in 4-amino-2-methyl-5-(diphosphooxymethyl)pyrimidine binding. Gly-304 is a 2-[(2R,5Z)-2-carboxy-4-methylthiazol-5(2H)-ylidene]ethyl phosphate binding site.

It belongs to the thiamine-phosphate synthase family. Mg(2+) serves as cofactor.

The catalysed reaction is 2-[(2R,5Z)-2-carboxy-4-methylthiazol-5(2H)-ylidene]ethyl phosphate + 4-amino-2-methyl-5-(diphosphooxymethyl)pyrimidine + 2 H(+) = thiamine phosphate + CO2 + diphosphate. The enzyme catalyses 2-(2-carboxy-4-methylthiazol-5-yl)ethyl phosphate + 4-amino-2-methyl-5-(diphosphooxymethyl)pyrimidine + 2 H(+) = thiamine phosphate + CO2 + diphosphate. It carries out the reaction 4-methyl-5-(2-phosphooxyethyl)-thiazole + 4-amino-2-methyl-5-(diphosphooxymethyl)pyrimidine + H(+) = thiamine phosphate + diphosphate. Its pathway is cofactor biosynthesis; thiamine diphosphate biosynthesis; thiamine phosphate from 4-amino-2-methyl-5-diphosphomethylpyrimidine and 4-methyl-5-(2-phosphoethyl)-thiazole: step 1/1. Functionally, condenses 4-methyl-5-(beta-hydroxyethyl)thiazole monophosphate (THZ-P) and 2-methyl-4-amino-5-hydroxymethyl pyrimidine pyrophosphate (HMP-PP) to form thiamine monophosphate (TMP). This chain is Thiamine-phosphate synthase, found in Nostoc sp. (strain PCC 7120 / SAG 25.82 / UTEX 2576).